A 250-amino-acid polypeptide reads, in one-letter code: Ribosomal RNA small subunit methyltransferase J (250 aa).

Residues 101-102, 117-118, 153-154, and D171 contribute to the S-adenosyl-L-methionine site; these read RD, ER, and SS.

Belongs to the methyltransferase superfamily. RsmJ family.

Its subcellular location is the cytoplasm. The catalysed reaction is guanosine(1516) in 16S rRNA + S-adenosyl-L-methionine = N(2)-methylguanosine(1516) in 16S rRNA + S-adenosyl-L-homocysteine + H(+). Functionally, specifically methylates the guanosine in position 1516 of 16S rRNA. This chain is Ribosomal RNA small subunit methyltransferase J, found in Escherichia coli (strain SMS-3-5 / SECEC).